The chain runs to 144 residues: Large ribosomal subunit protein uL15 (144 aa).

Residues 20–49 form a disordered region; that stretch reads GRGIGSGLGKTGGRGHKGQKSRSGGFHKVG. A compositionally biased stretch (gly residues) spans 21-31; sequence RGIGSGLGKTG.

The protein belongs to the universal ribosomal protein uL15 family. Part of the 50S ribosomal subunit.

Binds to the 23S rRNA. In Neisseria meningitidis serogroup C (strain 053442), this protein is Large ribosomal subunit protein uL15.